We begin with the raw amino-acid sequence, 156 residues long: Small ribosomal subunit protein uS7 (156 aa).

The protein belongs to the universal ribosomal protein uS7 family. As to quaternary structure, part of the 30S ribosomal subunit. Contacts proteins S9 and S11.

In terms of biological role, one of the primary rRNA binding proteins, it binds directly to 16S rRNA where it nucleates assembly of the head domain of the 30S subunit. Is located at the subunit interface close to the decoding center, probably blocks exit of the E-site tRNA. The polypeptide is Small ribosomal subunit protein uS7 (Carsonella ruddii).